A 690-amino-acid polypeptide reads, in one-letter code: Elongation factor G (690 aa).

Residues 8–282 form the tr-type G domain; the sequence is EKTRNIGIMA…AVVAYMPSPL (275 aa). Residues 17-24, 81-85, and 135-138 each bind GTP; these read AHIDAGKT, DTPGH, and NKMD.

The protein belongs to the TRAFAC class translation factor GTPase superfamily. Classic translation factor GTPase family. EF-G/EF-2 subfamily.

Its subcellular location is the cytoplasm. Catalyzes the GTP-dependent ribosomal translocation step during translation elongation. During this step, the ribosome changes from the pre-translocational (PRE) to the post-translocational (POST) state as the newly formed A-site-bound peptidyl-tRNA and P-site-bound deacylated tRNA move to the P and E sites, respectively. Catalyzes the coordinated movement of the two tRNA molecules, the mRNA and conformational changes in the ribosome. The protein is Elongation factor G of Alkaliphilus oremlandii (strain OhILAs) (Clostridium oremlandii (strain OhILAs)).